Reading from the N-terminus, the 96-residue chain is UPF0235 protein CKO_04329 (96 aa).

It belongs to the UPF0235 family.

This Citrobacter koseri (strain ATCC BAA-895 / CDC 4225-83 / SGSC4696) protein is UPF0235 protein CKO_04329.